A 297-amino-acid chain; its full sequence is Inosose dehydratase (297 aa).

Belongs to the IolE/MocC family. Glutathione serves as cofactor. Requires Co(2+) as cofactor. Mn(2+) is required as a cofactor.

The enzyme catalyses scyllo-inosose = 3D-3,5/4-trihydroxycyclohexane-1,2-dione + H2O. Its pathway is polyol metabolism; myo-inositol degradation into acetyl-CoA; acetyl-CoA from myo-inositol: step 2/7. Its function is as follows. Catalyzes the dehydration of inosose (2-keto-myo-inositol, 2KMI or 2,4,6/3,5-pentahydroxycyclohexanone) to 3D-(3,5/4)-trihydroxycyclohexane-1,2-dione (D-2,3-diketo-4-deoxy-epi-inositol). The chain is Inosose dehydratase from Clostridium perfringens (strain ATCC 13124 / DSM 756 / JCM 1290 / NCIMB 6125 / NCTC 8237 / Type A).